Consider the following 1256-residue polypeptide: Splicing factor, arginine/serine-rich 19 (1256 aa).

Disordered regions lie at residues 1-33 (MEEE…SPSA), 158-343 (GKTV…APRR), 371-395 (ALSL…PEEE), 408-1030 (PRQP…TLPP), 1112-1152 (GSLP…DKYL), and 1221-1256 (FRKH…LPPL). Basic and acidic residues predominate over residues 7–27 (SRGKTEESGEDRGDGPPDRDP). A compositionally biased stretch (low complexity) spans 192 to 206 (SSASSSPSPSPSSSS). Over residues 207–222 (PSPPPPPPPPPPPALP) the composition is skewed to pro residues. The span at 227–236 (DIYDPFHPTD) shows a compositional bias: basic and acidic residues. Ser240 carries the post-translational modification Phosphoserine. The segment covering 255–265 (TGSNPSSSAGT) has biased composition (polar residues). Residues 268–282 (PEEEEEEEEEEEEEG) are compositionally biased toward acidic residues. Thr328 bears the Phosphothreonine mark. Residues 382–393 (PEIEEGEIVQPE) show a composition bias toward acidic residues. The segment covering 412–424 (PASVATLASVAAP) has biased composition (low complexity). Phosphoserine is present on residues Ser442 and Ser447. Basic residues predominate over residues 478-489 (KILTQRRERYRQ). Ser491, Ser493, Ser510, Ser518, and Ser520 each carry phosphoserine. Composition is skewed to basic residues over residues 538–553 (TARR…RSRS) and 560–577 (RGGH…RRRS). A phosphoserine mark is found at Ser577 and Ser579. A compositionally biased stretch (basic residues) spans 592–611 (RERHRGKRREGGKKKKKRSR). Basic and acidic residues predominate over residues 612 to 623 (SRAEKRSGDLEK). Thr663 bears the Phosphothreonine mark. Phosphoserine is present on residues Ser676 and Ser682. Phosphotyrosine is present on Tyr689. Ser691 and Ser695 each carry phosphoserine. 2 stretches are compositionally biased toward basic and acidic residues: residues 696 to 709 (ADER…DRRR) and 719 to 741 (SREK…DRSS). Composition is skewed to low complexity over residues 752–775 (PGSG…SCSS) and 793–804 (SSTTPAKDSSSS). Residue Lys812 forms a Glycyl lysine isopeptide (Lys-Gly) (interchain with G-Cter in SUMO2) linkage. Over residues 813-831 (FSRDRESRSPFLKPDERAP) the composition is skewed to basic and acidic residues. Phosphoserine is present on residues Ser819 and Ser821. Basic residues predominate over residues 843–875 (KPKKTKAKAKAGAKKAKGTKGKTKPSKTRKKVR). 4 positions are modified to phosphoserine: Ser876, Ser883, Ser910, and Ser912. The segment covering 922–935 (STPPPKVAPPPPAL) has biased composition (pro residues). Residues Thr923 and Thr936 each carry the phosphothreonine modification. Positions 938–947 (DSQTVDSSCK) are enriched in polar residues. Ser939 bears the Phosphoserine mark. Thr948 is modified (phosphothreonine). The segment covering 969–984 (EEEEEEEEEEEEEEEQ) has biased composition (acidic residues). The segment covering 985-1017 (QPATTTATSTAAAAPSTAPSAGSTAGDSGAEDG) has biased composition (low complexity). The necessary for interaction with the CTD domain of POLR2A stretch occupies residues 1131–1256 (PASDKREGSS…GGPGLPLPPL (126 aa)). Over residues 1133–1152 (SDKREGSSSSEGRGDTDKYL) the composition is skewed to basic and acidic residues. Residues 1244–1256 (PDKGGPGLPLPPL) show a composition bias toward pro residues.

The protein belongs to the splicing factor SR family. As to quaternary structure, interacts with POLR2A.

The protein resides in the nucleus. Functionally, may function in pre-mRNA splicing. This is Splicing factor, arginine/serine-rich 19 (Scaf1) from Mus musculus (Mouse).